Reading from the N-terminus, the 488-residue chain is UDP-N-acetylmuramate--L-alanine ligase (488 aa).

Residue 122–128 (GTHGKTT) coordinates ATP.

Belongs to the MurCDEF family.

Its subcellular location is the cytoplasm. The catalysed reaction is UDP-N-acetyl-alpha-D-muramate + L-alanine + ATP = UDP-N-acetyl-alpha-D-muramoyl-L-alanine + ADP + phosphate + H(+). It participates in cell wall biogenesis; peptidoglycan biosynthesis. Cell wall formation. The protein is UDP-N-acetylmuramate--L-alanine ligase of Mycobacterium ulcerans (strain Agy99).